The primary structure comprises 288 residues: Very-long-chain (3R)-3-hydroxyacyl-CoA dehydratase 1 (288 aa).

A disordered region spans residues 1–59 (MGRLTEAAAAGGGASAARSAGPPPAPLPLSSTSPGCAAAMASSEEDGTNGGASEASDER). Topologically, residues 1 to 75 (MGRLTEAAAA…RRLGLLATIW (75 aa)) are cytoplasmic. The chain crosses the membrane as a helical span at residues 76–95 (LTFYNIAMTAGWLVLAIAMV). Residues 96–114 (RFYMEKGTHKGLYKSIQKT) lie on the Lumenal side of the membrane. Residues 115 to 131 (LKFFQTFALLEIVHCLI) form a helical membrane-spanning segment. The Cytoplasmic portion of the chain corresponds to 132–141 (GIVPTSVLVA). Residues 142 to 159 (GVQVSSRIFMVWLVTHSI) traverse the membrane as a helical segment. The Lumenal segment spans residues 160 to 165 (KPIQNE). Residues 166 to 180 (ESVVLFLVAWTVTEI) traverse the membrane as a helical segment. The Cytoplasmic portion of the chain corresponds to 181-203 (TRYSFYTFSLLDHLPYFIKWARY). Residues 204–221 (NFFIILYPVGVAGELLTI) form a helical membrane-spanning segment. Active-site residues include Tyr-210 and Glu-217. At 222 to 251 (YAALPYVKKTGMFSIRLPNKYNVSFDYYYF) the chain is on the lumenal side. Residue Asn-243 is glycosylated (N-linked (GlcNAc...) asparagine). A helical membrane pass occupies residues 252 to 269 (LLITMASYIPLFPQLYFH). Over 270–288 (MLRQRRKVLHGEVIVEKDD) the chain is Cytoplasmic.

It belongs to the very long-chain fatty acids dehydratase HACD family. As to quaternary structure, may interact with enzymes of the ELO family (including ELOVL1); with those enzymes that mediate condensation, the first of the four steps of the reaction cycle responsible for fatty acids elongation, may be part of a larger fatty acids elongase complex. Interacts with TECR. Post-translationally, N-glycosylated. As to expression, expressed in heart.

Its subcellular location is the endoplasmic reticulum membrane. The catalysed reaction is a very-long-chain (3R)-3-hydroxyacyl-CoA = a very-long-chain (2E)-enoyl-CoA + H2O. It catalyses the reaction (3R)-hydroxyhexadecanoyl-CoA = (2E)-hexadecenoyl-CoA + H2O. It carries out the reaction (3R)-hydroxyoctadecanoyl-CoA = (2E)-octadecenoyl-CoA + H2O. The enzyme catalyses (3R)-hydroxyeicosanoyl-CoA = (2E)-eicosenoyl-CoA + H2O. The catalysed reaction is (3R)-hydroxydocosanoyl-CoA = (2E)-docosenoyl-CoA + H2O. It catalyses the reaction (3R)-hydroxytetracosanoyl-CoA = (2E)-tetracosenoyl-CoA + H2O. It carries out the reaction (3R)-hydroxyhexacosanoyl-CoA = (2E)-hexacosenoyl-CoA + H2O. It functions in the pathway lipid metabolism; fatty acid biosynthesis. Its function is as follows. Catalyzes the third of the four reactions of the long-chain fatty acids elongation cycle. This endoplasmic reticulum-bound enzymatic process, allows the addition of two carbons to the chain of long- and very long-chain fatty acids/VLCFAs per cycle. This enzyme catalyzes the dehydration of the 3-hydroxyacyl-CoA intermediate into trans-2,3-enoyl-CoA, within each cycle of fatty acid elongation. Thereby, it participates in the production of VLCFAs of different chain lengths that are involved in multiple biological processes as precursors of membrane lipids and lipid mediators. This chain is Very-long-chain (3R)-3-hydroxyacyl-CoA dehydratase 1 (HACD1), found in Ovis aries (Sheep).